A 153-amino-acid polypeptide reads, in one-letter code: Nitrogen regulatory protein (153 aa).

The region spanning 5–148 (DLVAPEAILP…QAIYSVLALP (144 aa)) is the PTS EIIA type-2 domain. His-66 functions as the Tele-phosphohistidine intermediate in the catalytic mechanism.

The protein localises to the cytoplasm. In terms of biological role, seems to have a role in regulating nitrogen assimilation. This Bradyrhizobium diazoefficiens (strain JCM 10833 / BCRC 13528 / IAM 13628 / NBRC 14792 / USDA 110) protein is Nitrogen regulatory protein (ptsN).